The chain runs to 591 residues: L-fucose isomerase (591 aa).

Residues glutamate 337 and aspartate 361 each act as proton acceptor in the active site. Positions 337, 361, and 528 each coordinate Mn(2+).

It belongs to the L-fucose isomerase family. As to quaternary structure, homohexamer. The cofactor is Mn(2+).

Its subcellular location is the cytoplasm. The enzyme catalyses L-fucose = L-fuculose. The protein operates within carbohydrate degradation; L-fucose degradation; L-lactaldehyde and glycerone phosphate from L-fucose: step 1/3. In terms of biological role, converts the aldose L-fucose into the corresponding ketose L-fuculose. The chain is L-fucose isomerase from Escherichia coli (strain UTI89 / UPEC).